Here is a 684-residue protein sequence, read N- to C-terminus: Frizzled-8 (684 aa).

Residues 1-27 (MEWGYLLEVTSLLAALAVLQRSSGAAA) form the signal peptide. The Extracellular segment spans residues 28 to 271 (ASAKELACQE…NPFFSQDERA (244 aa)). The FZ domain maps to 30–151 (AKELACQEIT…GNPDTLCMDY (122 aa)). Disulfide bonds link cysteine 35/cysteine 96, cysteine 43/cysteine 89, cysteine 80/cysteine 118, cysteine 107/cysteine 148, and cysteine 111/cysteine 135. N-linked (GlcNAc...) asparagine glycosylation occurs at asparagine 49. 71–78 (QFWPLVEI) provides a ligand contact to hexadecanoate. The wnt-binding stretch occupies residues 95–100 (ICLEDY). The wnt-binding stretch occupies residues 147 to 152 (LCMDYN). N-linked (GlcNAc...) asparagine glycosylation occurs at asparagine 152. Residues 155 to 222 (DLTTAAPSPP…KARPPGGGAA (68 aa)) form a disordered region. Residues 161–175 (PSPPRRLPPPQPGEQ) are compositionally biased toward pro residues. Composition is skewed to low complexity over residues 176 to 186 (PPSGSGHSRPP) and 199 to 222 (GSGD…GGAA). The chain crosses the membrane as a helical span at residues 272–292 (FTVFWIGLWSVLCFVSTFATV). Residues 293–308 (STFLIDMERFKYPERP) lie on the Cytoplasmic side of the membrane. The chain crosses the membrane as a helical span at residues 309-329 (IIFLSACYLFVSVGYLVRLVA). At 330 to 393 (GHEKVACSGG…RYETTGPALC (64 aa)) the chain is on the extracellular side. Residues 394–414 (TVVFLLVYFFGMASSIWWVIL) traverse the membrane as a helical segment. Residues 415–436 (SLTWFLAAGMKWGNEAIAGYSQ) are Cytoplasmic-facing. A helical membrane pass occupies residues 437-457 (YFHLAAWLVPSVKSIAVLALS). The Extracellular segment spans residues 458–480 (SVDGDPVAGICYVGNQSLDNLRG). Asparagine 472 carries an N-linked (GlcNAc...) asparagine glycan. The chain crosses the membrane as a helical span at residues 481-501 (FVLAPLVIYLFIGTMFLLAGF). The Cytoplasmic portion of the chain corresponds to 502-529 (VSLFRIRSVIKQQGGPTKTHKLEKLMIR). The chain crosses the membrane as a helical span at residues 530-550 (LGLFTVLYTVPAAVVVACLFY). Over 551-581 (EQHNRPRWEATHNCPCLRDLQPDQARRPDYA) the chain is Extracellular. A helical transmembrane segment spans residues 582-602 (VFMLKYFMCLVVGITSGVWVW). Residues 603–684 (SGKTLESWRA…YPKQMPLSQV (82 aa)) lie on the Cytoplasmic side of the membrane. Residues 605 to 610 (KTLESW) carry the Lys-Thr-X-X-X-Trp motif, mediates interaction with the PDZ domain of Dvl family members motif. The span at 630 to 654 (AGGSGPGGGGPGPGGGGGHGGGGGS) shows a compositional bias: gly residues. Positions 630–655 (AGGSGPGGGGPGPGGGGGHGGGGGSL) are disordered. The short motif at 682–684 (SQV) is the PDZ-binding element.

It belongs to the G-protein coupled receptor Fz/Smo family. As to quaternary structure, component of a Wnt-signaling complex that contains a WNT protein, a FZD protein and LRP5 or LRP6. Interacts directly with LRP5 or LRP6; the interaction is promoted by Wnt-binding and signaling and inhibited by DKK1. Interacts (via the PDZ-binding motif) with GPOC (via its PDZ domain). Interacts with RSPO1 and RSPO3. Interacts with glypican GPC3. Ubiquitinated by ZNRF3, leading to its degradation by the proteasome.

The protein localises to the membrane. The protein resides in the golgi apparatus. It localises to the cell membrane. Functionally, receptor for Wnt proteins. Component of the Wnt-Fzd-LRP5-LRP6 complex that triggers beta-catenin signaling through inducing aggregation of receptor-ligand complexes into ribosome-sized signalosomes. The beta-catenin canonical signaling pathway leads to the activation of disheveled proteins, inhibition of GSK-3 kinase, nuclear accumulation of beta-catenin and activation of Wnt target genes. A second signaling pathway involving PKC and calcium fluxes has been seen for some family members, but it is not yet clear if it represents a distinct pathway or if it can be integrated in the canonical pathway, as PKC seems to be required for Wnt-mediated inactivation of GSK-3 kinase. Both pathways seem to involve interactions with G-proteins. May be involved in transduction and intercellular transmission of polarity information during tissue morphogenesis and/or in differentiated tissues. Coreceptor along with RYK of Wnt proteins, such as WNT1. The sequence is that of Frizzled-8 (Fzd8) from Rattus norvegicus (Rat).